A 438-amino-acid chain; its full sequence is Cell division cycle-associated 7-like protein (438 aa).

Residues 9–33 (IPKEVADIFNAPSDDEEFVGFQDDV) carry the Integrase domain-binding motif 1 (IBM1) motif. Residue Ser-21 is modified to Phosphoserine. The interval 55 to 114 (ACLHSKYFTEELRRIFKEDTDSDNEDFEGFTESELNIGSNPELIESELSDGDKTHPMMSD) is PSIP1-binding. The short motif at 62–88 (FTEELRRIFKEDTDSDNEDFEGFTESE) is the Integrase domain-binding motif 2 (IBM2) element. Positions 72-199 (EDTDSDNEDF…ESRAESQETS (128 aa)) are disordered. Phosphothreonine is present on Thr-74. Positions 74-85 (TDSDNEDFEGFT) are enriched in acidic residues. Phosphoserine is present on Ser-76. Thr-85 is subject to Phosphothreonine. A phosphoserine mark is found at Ser-100, Ser-103, Ser-113, Ser-135, Ser-136, Ser-183, and Ser-185. Residues 113–123 (SDEEDDDDEEE) show a composition bias toward acidic residues. Over residues 166–183 (TDLRREKSCRQPKEKEDS) the composition is skewed to basic and acidic residues. The segment at 201-223 (ALLKRAMNIKENKAMLAQLLAEL) is MYC-binding. Residues Lys-210 and Lys-213 each participate in a glycyl lysine isopeptide (Lys-Gly) (interchain with G-Cter in SUMO2) cross-link. A Phosphoserine modification is found at Ser-249.

As to quaternary structure, interacts with MYC. Interacts (via IBM motifs) with PSIP1 (via IBD domain); phosphorylation increases its affinity for PSIP1. In terms of processing, phosphorylation increases its interaction with PSIP1.

Its subcellular location is the cytoplasm. The protein resides in the nucleus. In terms of biological role, plays a role in transcriptional regulation as a repressor that inhibits monoamine oxidase A (MAOA) activity and gene expression by binding to the promoter. Plays an important oncogenic role in mediating the full transforming effect of MYC in medulloblastoma cells. Involved in apoptotic signaling pathways; May act downstream of P38-kinase and BCL-2, but upstream of CASP3/caspase-3 as well as CCND1/cyclin D1 and E2F1. This Rattus norvegicus (Rat) protein is Cell division cycle-associated 7-like protein (Cdca7l).